The primary structure comprises 123 residues: Small ribosomal subunit protein uS12 (123 aa).

Residues 1–28 form a disordered region; it reads MPTIQQLIRKPRQPKVKRSKSQHLEQCP. The span at 9–21 shows a compositional bias: basic residues; it reads RKPRQPKVKRSKS. At D89 the chain carries 3-methylthioaspartic acid.

This sequence belongs to the universal ribosomal protein uS12 family. As to quaternary structure, part of the 30S ribosomal subunit. Contacts proteins S8 and S17. May interact with IF1 in the 30S initiation complex.

With S4 and S5 plays an important role in translational accuracy. In terms of biological role, interacts with and stabilizes bases of the 16S rRNA that are involved in tRNA selection in the A site and with the mRNA backbone. Located at the interface of the 30S and 50S subunits, it traverses the body of the 30S subunit contacting proteins on the other side and probably holding the rRNA structure together. The combined cluster of proteins S8, S12 and S17 appears to hold together the shoulder and platform of the 30S subunit. The chain is Small ribosomal subunit protein uS12 from Ruegeria pomeroyi (strain ATCC 700808 / DSM 15171 / DSS-3) (Silicibacter pomeroyi).